The following is a 417-amino-acid chain: NADH-quinone oxidoreductase subunit D (417 aa).

The protein belongs to the complex I 49 kDa subunit family. As to quaternary structure, NDH-1 is composed of 14 different subunits. Subunits NuoB, C, D, E, F, and G constitute the peripheral sector of the complex.

Its subcellular location is the cell inner membrane. It catalyses the reaction a quinone + NADH + 5 H(+)(in) = a quinol + NAD(+) + 4 H(+)(out). Its function is as follows. NDH-1 shuttles electrons from NADH, via FMN and iron-sulfur (Fe-S) centers, to quinones in the respiratory chain. The immediate electron acceptor for the enzyme in this species is believed to be ubiquinone. Couples the redox reaction to proton translocation (for every two electrons transferred, four hydrogen ions are translocated across the cytoplasmic membrane), and thus conserves the redox energy in a proton gradient. The polypeptide is NADH-quinone oxidoreductase subunit D (Aromatoleum aromaticum (strain DSM 19018 / LMG 30748 / EbN1) (Azoarcus sp. (strain EbN1))).